The following is a 1173-amino-acid chain: Protein GIGANTEA (1173 aa).

Disordered stretches follow at residues 150–187 (EQQNGDTERNCLSKATTSGSPTSEPKAGSPTQHERKPL), 604–641 (SGSKRPRSEYASTTENIEANQPVSNNQTANRKSRNVKG), and 840–863 (SRTEMNPRGNHKYARHSDEGSGRP). Composition is skewed to polar residues over residues 162–172 (SKATTSGSPTS) and 613–633 (YASTTENIEANQPVSNNQTAN). Over residues 854-863 (RHSDEGSGRP) the composition is skewed to basic and acidic residues.

This sequence belongs to the GIGANTEA family. As to quaternary structure, interacts with SPY. Interacts with ADO1 (via N-terminus) and ADO2. Interacts with ADO3 (via N-terminus). Interacts (via N-terminus) with CDF1. Interacts (via N-terminus) with TCP4. As to expression, widely expressed with highest levels in inflorescence apices, young flowers and young siliques.

It is found in the nucleus. It localises to the cytoplasm. Its function is as follows. Involved in regulation of circadian rhythm and photoperiodic flowering. May play a role in maintenance of circadian amplitude and period length. Is involved in phytochrome B signaling. Stabilizes ADO3 and the circadian photoreceptor ADO1/ZTL. Regulates 'CONSTANS' (CO) in the long-day flowering pathway by modulating the ADO3-dependent protein stability of CDF1 and CDF2, but is not essential to activate CO transcription. Regulates, via the microRNA miR172, a CO-independent pathway that promotes photoperiodic flowering by inducing 'FLOWERING LOCUS T'. This Arabidopsis thaliana (Mouse-ear cress) protein is Protein GIGANTEA (GI).